A 360-amino-acid polypeptide reads, in one-letter code: Histidinol-phosphate aminotransferase (360 aa).

Residue Lys222 is modified to N6-(pyridoxal phosphate)lysine.

The protein belongs to the class-II pyridoxal-phosphate-dependent aminotransferase family. Histidinol-phosphate aminotransferase subfamily. In terms of assembly, homodimer. Requires pyridoxal 5'-phosphate as cofactor.

The enzyme catalyses L-histidinol phosphate + 2-oxoglutarate = 3-(imidazol-4-yl)-2-oxopropyl phosphate + L-glutamate. It functions in the pathway amino-acid biosynthesis; L-histidine biosynthesis; L-histidine from 5-phospho-alpha-D-ribose 1-diphosphate: step 7/9. This chain is Histidinol-phosphate aminotransferase, found in Listeria welshimeri serovar 6b (strain ATCC 35897 / DSM 20650 / CCUG 15529 / CIP 8149 / NCTC 11857 / SLCC 5334 / V8).